The primary structure comprises 489 residues: Long chain base biosynthesis protein 2b (489 aa).

The chain crosses the membrane as a helical span at residues 2–22; that stretch reads ITIPYLTAVSTYFSYGLLFAF. Lys311 carries the N6-(pyridoxal phosphate)lysine modification.

The protein belongs to the class-II pyridoxal-phosphate-dependent aminotransferase family. In terms of assembly, heterodimer with LCB1. Component of the serine palmitoyltransferase (SPT) complex, composed of LCB1 and LCB2 (LCB2a or LCB2b). Pyridoxal 5'-phosphate serves as cofactor. As to expression, ubiquitous with the highest expression in flowers.

The protein resides in the endoplasmic reticulum membrane. It carries out the reaction L-serine + hexadecanoyl-CoA + H(+) = 3-oxosphinganine + CO2 + CoA. The protein operates within lipid metabolism; sphingolipid metabolism. Its function is as follows. Serine palmitoyltransferase (SPT). The heterodimer formed with LCB1 constitutes the catalytic core. Plays an important role during male gametogenesis and embryogenesis. The polypeptide is Long chain base biosynthesis protein 2b (LCB2b) (Arabidopsis thaliana (Mouse-ear cress)).